Reading from the N-terminus, the 240-residue chain is UDP-2,3-diacylglucosamine hydrolase (240 aa).

Residues Asp8, His10, Asp41, Asn79, and His114 each coordinate Mn(2+). 79–80 (NR) contributes to the substrate binding site. The substrate site is built by Asp122, Ser160, Asn164, Lys167, and His195. Residues His195 and His197 each contribute to the Mn(2+) site.

Belongs to the LpxH family. Mn(2+) serves as cofactor.

Its subcellular location is the cell inner membrane. The enzyme catalyses UDP-2-N,3-O-bis[(3R)-3-hydroxytetradecanoyl]-alpha-D-glucosamine + H2O = 2-N,3-O-bis[(3R)-3-hydroxytetradecanoyl]-alpha-D-glucosaminyl 1-phosphate + UMP + 2 H(+). It functions in the pathway glycolipid biosynthesis; lipid IV(A) biosynthesis; lipid IV(A) from (3R)-3-hydroxytetradecanoyl-[acyl-carrier-protein] and UDP-N-acetyl-alpha-D-glucosamine: step 4/6. In terms of biological role, hydrolyzes the pyrophosphate bond of UDP-2,3-diacylglucosamine to yield 2,3-diacylglucosamine 1-phosphate (lipid X) and UMP by catalyzing the attack of water at the alpha-P atom. Involved in the biosynthesis of lipid A, a phosphorylated glycolipid that anchors the lipopolysaccharide to the outer membrane of the cell. This is UDP-2,3-diacylglucosamine hydrolase from Yersinia enterocolitica serotype O:8 / biotype 1B (strain NCTC 13174 / 8081).